A 251-amino-acid chain; its full sequence is MKILVAVKRVVDYAVKIRVKPDKTGVETQNVKMSMNPFCEIALEEALRIKEAGFAKEVIAVSIGPSQCVDTLRTGLAMGADRGIHVETNSIFLPLTIAKILKSLADVENPGLIFLGKQAIDDDCNQTGQMVAALLGWPQATFASKVVLDKDKNVATVDREVDGGLETLNVDLPAVITTDLRLNQPRYASLPNIMKAKSKPIKKMTVQDLKVDIKSDIEILEVTEPPKRKSGVMVSSVDELIDKLKNEAHVV.

Belongs to the ETF beta-subunit/FixA family. As to quaternary structure, heterodimer of an alpha and a beta subunit. FAD serves as cofactor. AMP is required as a cofactor.

It is found in the mitochondrion matrix. Functionally, the electron transfer flavoprotein serves as a specific electron acceptor for several dehydrogenases, including five acyl-CoA dehydrogenases, glutaryl-CoA and sarcosine dehydrogenase. It transfers the electrons to the main mitochondrial respiratory chain via ETF-ubiquinone oxidoreductase (ETF dehydrogenase). Involved in leucine catabolism and in phytol degradation. This Arabidopsis thaliana (Mouse-ear cress) protein is Electron transfer flavoprotein subunit beta, mitochondrial (ETFB).